The sequence spans 370 residues: Myomodulin neuropeptides 1 (370 aa).

The signal sequence occupies residues 1–18 (MQVYMLLPLAVFASLTYQ). Positions 19–50 (GACEETAAAQTSSDASTSSASSEHAENELSRA) are excised as a propeptide. A compositionally biased stretch (low complexity) spans 28–40 (QTSSDASTSSASS). A disordered region spans residues 28-52 (QTSSDASTSSASSEHAENELSRAKR). A leucine amide mark is found at L60 and L69. Residues 73–190 (GGPVEPESEE…EPEEGGLGEE (118 aa)) constitute a propeptide that is removed on maturation. L199 and L209 each carry leucine amide. Residues 210–226 (GKREGEEGDEMDKKQDE) show a composition bias toward basic and acidic residues. The tract at residues 210-230 (GKREGEEGDEMDKKQDESLND) is disordered. Residues 213-237 (EGEEGDEMDKKQDESLNDDFENDDI) constitute a propeptide that is removed on maturation. L246, L256, L266, L276, L286, L296, L306, L316, L326, L336, and L346 each carry leucine amide. The interval 344-370 (LRLGKRDDDEKEKKSLNMSRLGKRSTQ) is disordered. The span at 347 to 358 (GKRDDDEKEKKS) shows a compositional bias: basic and acidic residues. The propeptide occupies 350–355 (DDDEKE). A Leucine amide modification is found at L364. A propeptide spanning residues 368-370 (STQ) is cleaved from the precursor.

In terms of tissue distribution, expressed in all ganglia of the CNS, but only in a subset of neurons including L10 in the abdominal ganglion and B16 in the buccal ganglion.

It is found in the secreted. Exogenous application of myomodulins potentiates ARC muscle contraction. This chain is Myomodulin neuropeptides 1 (MYOMOD1), found in Aplysia californica (California sea hare).